The primary structure comprises 121 residues: Small ribosomal subunit protein uS13 (121 aa).

The interval 93-121 (RGLPVRGQNTKNNARTRKGPRRTVANKKK) is disordered. Positions 106–121 (ARTRKGPRRTVANKKK) are enriched in basic residues.

The protein belongs to the universal ribosomal protein uS13 family. As to quaternary structure, part of the 30S ribosomal subunit. Forms a loose heterodimer with protein S19. Forms two bridges to the 50S subunit in the 70S ribosome.

Its function is as follows. Located at the top of the head of the 30S subunit, it contacts several helices of the 16S rRNA. In the 70S ribosome it contacts the 23S rRNA (bridge B1a) and protein L5 of the 50S subunit (bridge B1b), connecting the 2 subunits; these bridges are implicated in subunit movement. Contacts the tRNAs in the A and P-sites. This is Small ribosomal subunit protein uS13 from Bacillus licheniformis (strain ATCC 14580 / DSM 13 / JCM 2505 / CCUG 7422 / NBRC 12200 / NCIMB 9375 / NCTC 10341 / NRRL NRS-1264 / Gibson 46).